The sequence spans 176 residues: Inorganic pyrophosphatase (176 aa).

Substrate-binding residues include Lys-30, Arg-44, and Tyr-56. Mg(2+)-binding residues include Asp-66, Asp-71, and Asp-103. Tyr-142 serves as a coordination point for substrate.

The protein belongs to the PPase family. Homohexamer. It depends on Mg(2+) as a cofactor.

The protein resides in the cytoplasm. It carries out the reaction diphosphate + H2O = 2 phosphate + H(+). In terms of biological role, catalyzes the hydrolysis of inorganic pyrophosphate (PPi) forming two phosphate ions. The chain is Inorganic pyrophosphatase from Escherichia coli O157:H7.